Consider the following 167-residue polypeptide: NAD(P)H-quinone oxidoreductase subunit J (167 aa).

It belongs to the complex I 30 kDa subunit family. In terms of assembly, NDH-1 can be composed of about 15 different subunits; different subcomplexes with different compositions have been identified which probably have different functions.

Its subcellular location is the cellular thylakoid membrane. The catalysed reaction is a plastoquinone + NADH + (n+1) H(+)(in) = a plastoquinol + NAD(+) + n H(+)(out). It catalyses the reaction a plastoquinone + NADPH + (n+1) H(+)(in) = a plastoquinol + NADP(+) + n H(+)(out). Its function is as follows. NDH-1 shuttles electrons from an unknown electron donor, via FMN and iron-sulfur (Fe-S) centers, to quinones in the respiratory and/or the photosynthetic chain. The immediate electron acceptor for the enzyme in this species is believed to be plastoquinone. Couples the redox reaction to proton translocation, and thus conserves the redox energy in a proton gradient. Cyanobacterial NDH-1 also plays a role in inorganic carbon-concentration. The sequence is that of NAD(P)H-quinone oxidoreductase subunit J from Trichodesmium erythraeum (strain IMS101).